A 348-amino-acid chain; its full sequence is Uroporphyrinogen decarboxylase (348 aa).

Residues 28-32 (RQAGR), D78, Y154, T209, and H325 each bind substrate.

This sequence belongs to the uroporphyrinogen decarboxylase family. In terms of assembly, homodimer.

The protein localises to the cytoplasm. The enzyme catalyses uroporphyrinogen III + 4 H(+) = coproporphyrinogen III + 4 CO2. It functions in the pathway porphyrin-containing compound metabolism; protoporphyrin-IX biosynthesis; coproporphyrinogen-III from 5-aminolevulinate: step 4/4. Its function is as follows. Catalyzes the decarboxylation of four acetate groups of uroporphyrinogen-III to yield coproporphyrinogen-III. The protein is Uroporphyrinogen decarboxylase of Rhodopseudomonas palustris (strain BisA53).